The primary structure comprises 397 residues: Purine nucleoside transport protein NupG (397 aa).

A run of 11 helical transmembrane segments spans residues 1–21 (MYFL…FLCS), 32–52 (IITL…TKVG), 62–82 (FFTW…PSVM), 97–117 (IIFI…PWLI), 133–153 (LESF…LAVI), 165–185 (LLTF…GSYL), 187–207 (MVPA…ALII), 242–262 (MLVG…YVAL), 282–302 (IFAY…HDAM), 335–355 (VAVA…GMIY), and 377–397 (LLVS…LFVW).

The protein belongs to the concentrative nucleoside transporter (CNT) (TC 2.A.41) family.

Its subcellular location is the cell membrane. Its function is as follows. Involved in the uptake of the purine ribonucleosides inosine and guanosine. The polypeptide is Purine nucleoside transport protein NupG (nupG) (Bacillus subtilis (strain 168)).